A 368-amino-acid chain; its full sequence is uncharacterized protein (368 aa).

The N-terminal stretch at 1 to 19 is a signal peptide; sequence MHVSMIIFVSIFSIKYIMA. N99, N170, N266, and N295 each carry an N-linked (GlcNAc...) asparagine; by host glycan.

This is an uncharacterized protein from Ostreid herpesvirus 1 (isolate France) (OsHV-1).